The primary structure comprises 447 residues: Argininosuccinate synthase (447 aa).

ATP-binding positions include Ala17–Ser25 and Ala43. Position 99 (Tyr99) interacts with L-citrulline. Residues Gly129 and Thr131 each coordinate ATP. L-aspartate contacts are provided by Thr131, Asn135, and Asp136. An L-citrulline-binding site is contributed by Asn135. Position 136 (Asp136) interacts with ATP. The L-citrulline site is built by Arg139 and Ser192. Asp194 contributes to the ATP binding site. Thr201, Glu203, and Glu280 together coordinate L-citrulline.

The protein belongs to the argininosuccinate synthase family. Type 2 subfamily. Homotetramer.

The protein localises to the cytoplasm. It catalyses the reaction L-citrulline + L-aspartate + ATP = 2-(N(omega)-L-arginino)succinate + AMP + diphosphate + H(+). It participates in amino-acid biosynthesis; L-arginine biosynthesis; L-arginine from L-ornithine and carbamoyl phosphate: step 2/3. In Shigella boydii serotype 18 (strain CDC 3083-94 / BS512), this protein is Argininosuccinate synthase.